Consider the following 313-residue polypeptide: Ketimine reductase mu-crystallin (313 aa).

Arg-47 provides a ligand contact to 3,3',5-triiodo-L-thyronine. NADPH is bound by residues Ser-90, His-91, Arg-118, Ala-143, Val-145, Gln-146, Asn-167, Arg-168, Thr-169, Asn-172, Thr-204, Met-205, and Val-225. Glu-256 contributes to the 3,3',5-triiodo-L-thyronine binding site. Ser-291 provides a ligand contact to NADPH.

Belongs to the ornithine cyclodeaminase/mu-crystallin family. As to quaternary structure, homodimer. Binds the thyroid hormone triiodothyronine (T3); T3 binding inhibits enzymatic activity. As to expression, expressed in the spiral ligament of the cochlea (at protein level).

Its subcellular location is the cytoplasm. It carries out the reaction L-pipecolate + NADP(+) = Delta(1)-piperideine-2-carboxylate + NADPH + H(+). It catalyses the reaction L-pipecolate + NAD(+) = Delta(1)-piperideine-2-carboxylate + NADH + H(+). The enzyme catalyses L-proline + NADP(+) = 1-pyrroline-2-carboxylate + NADPH + H(+). The catalysed reaction is L-proline + NAD(+) = 1-pyrroline-2-carboxylate + NADH + H(+). It carries out the reaction (3R)-1,4-thiomorpholine-3-carboxylate + NAD(+) = 3,4-dehydrothiomorpholine-3-carboxylate + NADH + 2 H(+). It catalyses the reaction (3R)-1,4-thiomorpholine-3-carboxylate + NADP(+) = 3,4-dehydrothiomorpholine-3-carboxylate + NADPH + 2 H(+). The enzyme catalyses (S)-cystathionine ketimine + NADH + 2 H(+) = (3R,5S)-2,3,5,6,7-pentahydro-1,4-thiazepine-3,5-dicarboxylate + NAD(+). The catalysed reaction is (S)-cystathionine ketimine + NADPH + 2 H(+) = (3R,5S)-2,3,5,6,7-pentahydro-1,4-thiazepine-3,5-dicarboxylate + NADP(+). It carries out the reaction (R)-lanthionine ketimine + NADPH + 2 H(+) = (3R,5R)-1,4-thiomorpholine-3,5-dicarboxylate + NADP(+). It catalyses the reaction Delta(2)-thiazoline-2-carboxylate + NADPH + 2 H(+) = L-thiazolidine-2-carboxylate + NADP(+). Catalyzes the NAD(P)H-dependent reduction of imine double bonds of a number of cyclic ketimine substrates, including sulfur-containing cyclic ketimines. Under physiological conditions, it efficiently catalyzes delta(1)-piperideine-2-carboxylate (P2C) and delta(1)-pyrroline-2-carboxylate (Pyr2C) reduction, suggesting a central role in lysine and glutamate metabolism. Additional substrates are delta(2)-thiazoline-2-carboxylate (T2C), 3,4-dehydrothiomorpholine-3-carboxylate (AECK), and (R)-lanthionine ketimine (LK) that is reduced at very low rate compared to other substrates. Also catalyzes the NAD(P)H-dependent reduction of (S)-cystathionine ketimine (CysK). This is Ketimine reductase mu-crystallin from Mus musculus (Mouse).